The following is a 120-amino-acid chain: Protein RALF-like 1 (120 aa).

The first 26 residues, 1 to 26, serve as a signal peptide directing secretion; sequence MDKSFTLFLTLTILVVFIISSPPVQA. A propeptide spans 27–71 (removed in mature form); it reads GFANDLGGVAWATTGDNGSGCHGSIAECIGAEEEEMDSEINRRIL. Residue Asn43 is glycosylated (N-linked (GlcNAc...) asparagine). 2 cysteine pairs are disulfide-bonded: Cys89/Cys99 and Cys112/Cys118.

This sequence belongs to the plant rapid alkalinization factor (RALF) family. As to quaternary structure, interacts with FER and promotes its phosphorylation and subsequent activation. In terms of processing, proteolytically cleaved, probably by S1P, a subtilisin-like serine protease (subtilase). Expressed in roots and stems.

The protein localises to the secreted. In terms of biological role, cell signaling peptide that may regulate plant stress, growth, and development. Mediates a rapid alkalinization of extracellular space by mediating a transient increase in the cytoplasmic Ca(2+) concentration leading to a calcium-dependent signaling events through a cell surface receptor and a concomitant activation of some intracellular mitogen-activated protein kinases. Mostly active in roots. Prevents plant growth (e.g. root and leaf length). Suppresses cell elongation of the primary root by activating the cell surface receptor FER and triggering phosphorylation of AHA2 and subsequent extracellular alkalinization. This chain is Protein RALF-like 1 (RALF1), found in Arabidopsis thaliana (Mouse-ear cress).